A 492-amino-acid polypeptide reads, in one-letter code: Phosphatidylinositol 4-kinase type 2-beta (492 aa).

The segment covering 1-11 (MEPKQTADARD) has biased composition (basic and acidic residues). The tract at residues 1 to 98 (MEPKQTADAR…SDRENMSGGH (98 aa)) is disordered. The 336-residue stretch at 127 to 462 (GVFPERISQG…VQMPRVVVER (336 aa)) folds into the PI3K/PI4K catalytic domain. A G-loop region spans residues 133-139 (ISQGSSG). The ATP site is built by S140 and K155. The tract at residues 160–162 (EPY) is important for substrate binding. The segment at 168–181 (KWTKYFHKICCPCC) is important for interaction with membranes. ATP-binding positions include 264 to 267 (QLFV) and 278 to 279 (RK). The tract at residues 271-279 (KEADYWLRK) is important for interaction with membranes. The tract at residues 308–316 (RNTDRGNDN) is catalytic loop. Residues 353–373 (AIDNGLAFPFKHPDEWRAYPF) form an activation loop region. D355 lines the ATP pocket. An important for interaction with membranes region spans residues 368-377 (WRAYPFHWAW).

Belongs to the PI3/PI4-kinase family. Type II PI4K subfamily.

It is found in the cytoplasm. It localises to the cytosol. Its subcellular location is the golgi apparatus membrane. The protein resides in the endoplasmic reticulum membrane. The protein localises to the cell membrane. It is found in the early endosome membrane. The enzyme catalyses a 1,2-diacyl-sn-glycero-3-phospho-(1D-myo-inositol) + ATP = a 1,2-diacyl-sn-glycero-3-phospho-(1D-myo-inositol 4-phosphate) + ADP + H(+). In terms of biological role, contributes to the overall PI4-kinase activity of the cell. This contribution may be especially significant in plasma membrane, endosomal and Golgi compartments. The phosphorylation of phosphatidylinositol (PI) to PI4P is the first committed step in the generation of phosphatidylinositol 4,5-bisphosphate (PIP2), a precursor of the second messenger inositol 1,4,5-trisphosphate (InsP3). The chain is Phosphatidylinositol 4-kinase type 2-beta (pi4k2b) from Xenopus tropicalis (Western clawed frog).